Reading from the N-terminus, the 148-residue chain is 3-dehydroquinate dehydratase 2 (148 aa).

Tyr24 serves as the catalytic Proton acceptor. The substrate site is built by Asn75, His81, and Asp88. His101 serves as the catalytic Proton donor. Substrate contacts are provided by residues 102-103 (LS) and Arg112.

It belongs to the type-II 3-dehydroquinase family. In terms of assembly, homododecamer.

The catalysed reaction is 3-dehydroquinate = 3-dehydroshikimate + H2O. Its pathway is metabolic intermediate biosynthesis; chorismate biosynthesis; chorismate from D-erythrose 4-phosphate and phosphoenolpyruvate: step 3/7. Catalyzes a trans-dehydration via an enolate intermediate. This Pseudomonas aeruginosa (strain ATCC 15692 / DSM 22644 / CIP 104116 / JCM 14847 / LMG 12228 / 1C / PRS 101 / PAO1) protein is 3-dehydroquinate dehydratase 2 (aroQ2).